Reading from the N-terminus, the 100-residue chain is NAD(P)H-quinone oxidoreductase subunit 4L, chloroplastic (100 aa).

A run of 3 helical transmembrane segments spans residues 1–21 (MFGHALLLGAFPFCIGIYGLI), 29–49 (ALMCLELIFNAVNVNFVTFPN), and 63–83 (VFVIAVAAAEAAIGSAIVLAI).

It belongs to the complex I subunit 4L family. NDH is composed of at least 16 different subunits, 5 of which are encoded in the nucleus.

Its subcellular location is the plastid. It localises to the chloroplast thylakoid membrane. The catalysed reaction is a plastoquinone + NADH + (n+1) H(+)(in) = a plastoquinol + NAD(+) + n H(+)(out). The enzyme catalyses a plastoquinone + NADPH + (n+1) H(+)(in) = a plastoquinol + NADP(+) + n H(+)(out). Its function is as follows. NDH shuttles electrons from NAD(P)H:plastoquinone, via FMN and iron-sulfur (Fe-S) centers, to quinones in the photosynthetic chain and possibly in a chloroplast respiratory chain. The immediate electron acceptor for the enzyme in this species is believed to be plastoquinone. Couples the redox reaction to proton translocation, and thus conserves the redox energy in a proton gradient. This is NAD(P)H-quinone oxidoreductase subunit 4L, chloroplastic from Huperzia lucidula (Shining clubmoss).